Consider the following 169-residue polypeptide: Large ribosomal subunit protein uL10 (169 aa).

It belongs to the universal ribosomal protein uL10 family. In terms of assembly, part of the ribosomal stalk of the 50S ribosomal subunit. The N-terminus interacts with L11 and the large rRNA to form the base of the stalk. The C-terminus forms an elongated spine to which L12 dimers bind in a sequential fashion forming a multimeric L10(L12)X complex.

Functionally, forms part of the ribosomal stalk, playing a central role in the interaction of the ribosome with GTP-bound translation factors. The protein is Large ribosomal subunit protein uL10 of Rickettsia felis (strain ATCC VR-1525 / URRWXCal2) (Rickettsia azadi).